Here is a 385-residue protein sequence, read N- to C-terminus: MKFPSFLSLGIAASTTALAALPDQKPIGDTIADVHLGKFLIELAPGDTRWVTEEEKWGLKRDGRKFFDITAEVEQNLFPRAFAKTAVTFPTGLHRTVEVMPLAAQLSKDNMFSHLTTFTSFHTRYYKSETGIQSATWLMKQIQKTISSSPASNARVEKFEHPWGQFSVIATVPGQSNKTVVIGAHQDSINMFLPSILAAPGADDDGSGTVTILEAFRVLLQSEAIAQGNATNTVEFHWYSAEEGGLLGSQAVFSKYKQDNKDIRAMLQQDMTGYSKGTLDAGELESVGVITDFVDEGLTEFIKKVVNGYCDIPFVLTECGYACSDHASASRFGYPSAFVIESKFEHSSQHIHTGQDTIETLDFNHMLQHAKMTLGLAYELAFADI.

The first 19 residues, Met1–Ala19, serve as a signal peptide directing secretion. Residues Ala20–Val87 constitute a propeptide that is removed on maturation. N-linked (GlcNAc...) asparagine glycosylation occurs at Asn177. Zn(2+)-binding residues include His185 and Asp204. The N-linked (GlcNAc...) asparagine glycan is linked to Asn229. Zn(2+)-binding residues include Glu243 and Asp270. Cysteines 319 and 323 form a disulfide. His352 provides a ligand contact to Zn(2+).

It belongs to the peptidase M28 family. M28E subfamily. In terms of assembly, monomer. It depends on Zn(2+) as a cofactor.

It localises to the secreted. Extracellular aminopeptidase that allows assimilation of proteinaceous substrates. The chain is Leucine aminopeptidase 1 (LAP1) from Ajellomyces dermatitidis (strain ER-3 / ATCC MYA-2586) (Blastomyces dermatitidis).